We begin with the raw amino-acid sequence, 445 residues long: Phosphoglucosamine mutase (445 aa).

Ser102 serves as the catalytic Phosphoserine intermediate. Mg(2+)-binding residues include Ser102, Asp241, Asp243, and Asp245. Ser102 bears the Phosphoserine mark.

This sequence belongs to the phosphohexose mutase family. Mg(2+) serves as cofactor. Post-translationally, activated by phosphorylation.

The enzyme catalyses alpha-D-glucosamine 1-phosphate = D-glucosamine 6-phosphate. Catalyzes the conversion of glucosamine-6-phosphate to glucosamine-1-phosphate. This Haemophilus influenzae (strain 86-028NP) protein is Phosphoglucosamine mutase.